The primary structure comprises 304 residues: MITVFSGGTGTPKLIRGLRQILHDHEITVVVNTAEDLWMSGLYVSPDIDTVQYLFSGLLNTDSWWGIRGDSFETFHAMEKLGYTELLPLGDKDRATNIARAEFLRQGMTLTEATEKIAKGYGVSARILPMSDQNVASYVVCEDDSLMHYQEYWVGKRGNVNIKGVVRKTTDGLPLKTTPEVISAIEESDGVIIGPSNPVTSIGPILECAGVREALQNTFTAAVSPFIGNRPVSGPAAALMKAWGYESTSYGTWQVYKDVVDLFIQDVRDTAIEVPGAHRLDTMMTNEKKAESLAWDLLSYFPRK.

D49 is a binding site for 7,8-didemethyl-8-hydroxy-5-deazariboflavin.

It belongs to the CofD family. Homodimer. Mg(2+) is required as a cofactor.

The catalysed reaction is (2S)-lactyl-2-diphospho-5'-guanosine + 7,8-didemethyl-8-hydroxy-5-deazariboflavin = oxidized coenzyme F420-0 + GMP + H(+). The protein operates within cofactor biosynthesis; coenzyme F420 biosynthesis. In terms of biological role, catalyzes the transfer of the 2-phospholactate moiety from (2S)-lactyl-2-diphospho-5'-guanosine to 7,8-didemethyl-8-hydroxy-5-deazariboflavin (FO) with the formation of oxidized coenzyme F420-0 and GMP. This Methanocorpusculum labreanum (strain ATCC 43576 / DSM 4855 / Z) protein is 2-phospho-L-lactate transferase.